Consider the following 315-residue polypeptide: Eukaryotic translation initiation factor 2 subunit 1 (315 aa).

The region spanning 17-88 is the S1 motif domain; the sequence is EDVVMVNVRS…EKGYIDLSKR (72 aa). Serine 49 bears the Phosphoserine; by HRI mark. The residue at position 52 (serine 52) is a Phosphoserine. Lysine 141 carries the N6-acetyllysine modification. A Phosphoserine modification is found at serine 158. A phosphothreonine mark is found at threonine 279 and threonine 281. The segment at 292–315 is disordered; that stretch reads RLERENAEVDGDDDAEEMEAKAED. Over residues 299-308 the composition is skewed to acidic residues; that stretch reads EVDGDDDAEE.

Belongs to the eIF-2-alpha family. As to quaternary structure, eukaryotic translation initiation factor 2 eIF2 is a heterotrimeric complex composed of an alpha (EIF2S1), a beta (EIF2S2) and a gamma (EIF2S3) chain. eIF2 is member of the 43S pre-initiation complex (43S PIC). eIF2 forms a complex with at least CELF1/CUGBP1, CALR, CALR3, EIF2S1, EIF2S2, HSP90B1 and HSPA5. Interaction with METAP2 protects EIF2S1 from inhibitory phosphorylation. Interacts with ABCF1. Associates with ribosomes. Interacts with DDX3X in an RNA-independent manner. Phosphorylation at Ser-49 and Ser-52 stabilizes the eIF-2/GDP/eIF2B complex and prevents GDP/GTP exchange reaction, thus impairing the recycling of eIF-2 between successive rounds of initiation and leading to global inhibition of translation, while concomitantly initiating the preferential translation of integrated stress response (ISR)-specific mRNAs. Substrate for at least 4 kinases: EIF2AK1/HRI, EIF2AK2/PKR, EIF2AK3/PERK and EIF2AK4/GCN2. Phosphorylation at Ser-52 by the EIF2AK3/PERK protein kinase occurs in response to the unfolded protein response. Phosphorylation on Ser-52 by the EIF2AK4/GCN2 protein kinase occurs in response to amino acid starvation and UV irradiation. Phosphorylation at Ser-52 by EIF2AK1/HRI in response to mitochondrial damage promotes relocalization to the mitochondrial surface.

Its subcellular location is the cytoplasm. The protein resides in the stress granule. It localises to the cytosol. The protein localises to the mitochondrion. Its activity is regulated as follows. Activity is regulated by phosphorylation at Ser-49 and Ser-52, which stabilizes the eIF2/GDP/eIF2B complex and prevents the eIF2B-mediated exchange of GDP for GTP, thereby preventing the formation of the 43S pre-initiation complex (43S PIC). This results in the global attenuation of 5' cap-dependent protein synthesis and concomitant translation of ISR-specific mRNAs that contain a short upstream open reading frame (uORF) in their 5' UTR, such as ATF4, ATF5, DDIT3/CHOP and PPP1R15A/GADD34. Member of the eIF2 complex that functions in the early steps of protein synthesis by forming a ternary complex with GTP and initiator tRNA. This complex binds to a 40S ribosomal subunit, followed by mRNA binding to form a 43S pre-initiation complex. Junction of the 60S ribosomal subunit to form the 80S initiation complex is preceded by hydrolysis of the GTP bound to eIF2 and release of an eIF2-GDP binary complex. In order for eIF2 to recycle and catalyze another round of initiation, the GDP bound to eIF2 must exchange with GTP by way of a reaction catalyzed by eIF2B. EIF2S1/eIF2-alpha is a key component of the integrated stress response (ISR), required for adaptation to various stress: phosphorylation by metabolic-stress sensing protein kinases (EIF2AK1/HRI, EIF2AK2/PKR, EIF2AK3/PERK and EIF2AK4/GCN2) in response to stress converts EIF2S1/eIF2-alpha in a global protein synthesis inhibitor, leading to a attenuation of cap-dependent translation, while concomitantly initiating the preferential translation of ISR-specific mRNAs, such as the transcriptional activators ATF4 and QRICH1, and hence allowing ATF4- and QRICH1-mediated reprogramming. EIF2S1/eIF2-alpha also acts as an activator of mitophagy in response to mitochondrial damage: phosphorylation by EIF2AK1/HRI promotes relocalization to the mitochondrial surface, thereby triggering PRKN-independent mitophagy. The sequence is that of Eukaryotic translation initiation factor 2 subunit 1 (EIF2S1) from Sus scrofa (Pig).